A 351-amino-acid polypeptide reads, in one-letter code: Dihydroorotate dehydrogenase (quinone) (351 aa).

FMN is bound by residues Ala67–Lys71 and Thr91. Lys71 contacts substrate. Residue Asn116–Phe120 coordinates substrate. FMN-binding residues include Asn145 and Asn178. Asn178 serves as a coordination point for substrate. Ser181 acts as the Nucleophile in catalysis. Asn183 contacts substrate. FMN-binding residues include Lys214 and Thr242. Residue Asn243 to Thr244 participates in substrate binding. FMN is bound by residues Gly262, Gly291, and Tyr312–Thr313.

Belongs to the dihydroorotate dehydrogenase family. Type 2 subfamily. Monomer. It depends on FMN as a cofactor.

It is found in the cell membrane. The catalysed reaction is (S)-dihydroorotate + a quinone = orotate + a quinol. The protein operates within pyrimidine metabolism; UMP biosynthesis via de novo pathway; orotate from (S)-dihydroorotate (quinone route): step 1/1. Catalyzes the conversion of dihydroorotate to orotate with quinone as electron acceptor. The polypeptide is Dihydroorotate dehydrogenase (quinone) (Nitratiruptor sp. (strain SB155-2)).